We begin with the raw amino-acid sequence, 1145 residues long: MAYPEKVGNRVRWNYGKLREVLDLPNLIEVQRNSYEWFLQEGLREVFHDISPIQDFTGNLILEFLDYTLGEPKYSVEECKERDVTYAAPLRVKVRLINKETGEVKEQEVFMGDFPLMTSKGTFIINGAERVIVSQLVRSPGVYFADQIDPSGKRLFATTMIPNRGAWLEFETDVNDHIFVRIDRTRKIPATVLIRALGYGSNALIMELFENDKFVQETLTRDNTDTEEEALVEIYKRLRPGEPPTVESARSLLNTLFFDPKRYDLAHVGRYKLQKKLKHGILYRYPNGEEGPKEWDRLLNKEVPVDREFIRELTKEDIIATFRYLLNLMQGEGIVDDIDHLGNRRLRSVGELLQNQFRIGLSRMERVVRERMTIQDVDVITPQVLINIRPVVASIKEFFGSSQLSQFMDQTNPLAELTHKRRLSALGPGGLSRERAGFEVRDVHHSHYGRMCPIETPEGPNIGLIGSLSTYARINSFGFMEAPYRKVDKENKRVTDEIVYLTADEEEDHIIAQANAPLDENGYFVEERVNARRGHDTLLVPTDRVEYMDVSPKQVFSVATSLIPFLEHDDANRALMGANMQRQAVPLLRCQAPVVGTGIEHRAAKDSGVCIVAERGGEVVRVTATEVAVRTDEGRTDTYKLLKFTRSNQGTCINQKPIVNKGDRVEEGQILADGPATEQGELALGRNILVAFMTWEGNNYEDAILISEKAVKEDFFTSIHIEEYECDARDTKLGPEEITRDIPNVGEDILKDLDERGIIRVGAEVRPGDILVGKVTPKGETELTAEERLLRAIFGEKAREVRDTSLRVPHGEAGKIVDVKVFSRENGDELPPGVNHLVRCYIAQKRKISEGDKMAGRHGNKGVVARILPEEDMPFMADGTPVQIVLNPLGVPSRMNIGQVLETHLGWAAKTLGFNVATPVFNGASEESIWETLRRAELPEDGKTVLYDGRTGEPFDNRVTVGYIYMIKLHHLVDDKIHARSTGPYSLVTQQPLGGKAQFGGQRFGEMEVWALEAYGAAYTLQEILTVKSDDVVGRVKTYEAIVKGENVPEPGVPESFKVLIKELQSLGLDVKVLAEDEKEIEIKEIEEDITETAKELGIELPEERRVSSSKEEIEEEEEVEDNSDEFDETFLEEAEDDFSLDDED.

Over residues 1101–1112 (LPEERRVSSSKE) the composition is skewed to basic and acidic residues. A disordered region spans residues 1101-1145 (LPEERRVSSSKEEIEEEEEVEDNSDEFDETFLEEAEDDFSLDDED). Acidic residues predominate over residues 1113–1145 (EIEEEEEVEDNSDEFDETFLEEAEDDFSLDDED).

Belongs to the RNA polymerase beta chain family. As to quaternary structure, the RNAP catalytic core consists of 2 alpha, 1 beta, 1 beta' and 1 omega subunit. When a sigma factor is associated with the core the holoenzyme is formed, which can initiate transcription.

The catalysed reaction is RNA(n) + a ribonucleoside 5'-triphosphate = RNA(n+1) + diphosphate. Its function is as follows. DNA-dependent RNA polymerase catalyzes the transcription of DNA into RNA using the four ribonucleoside triphosphates as substrates. In Desulforamulus reducens (strain ATCC BAA-1160 / DSM 100696 / MI-1) (Desulfotomaculum reducens), this protein is DNA-directed RNA polymerase subunit beta.